A 663-amino-acid polypeptide reads, in one-letter code: Transmembrane 9 superfamily member 2 (663 aa).

The first 28 residues, Met1–Pro28, serve as a signal peptide directing secretion. At Gly29–Gln300 the chain is on the lumenal side. Residues Trp301–Ile321 form a helical membrane-spanning segment. Residues Met322–Gln374 lie on the Cytoplasmic side of the membrane. A helical transmembrane segment spans residues Ile375–Asn395. Over Arg396–Ala398 the chain is Lumenal. A helical membrane pass occupies residues Leu399 to Ala419. At Arg420–Thr437 the chain is on the cytoplasmic side. The helical transmembrane segment at Ser438–Gly458 threads the bilayer. Over Glu459–Pro466 the chain is Lumenal. A helical transmembrane segment spans residues Phe467–Ile487. The Cytoplasmic segment spans residues Gly488 to Pro522. The helical transmembrane segment at Gly523–Leu543 threads the bilayer. The Lumenal portion of the chain corresponds to Asn544–Met554. Residues Phe555–Leu575 form a helical membrane-spanning segment. Topologically, residues Leu576 to Arg591 are cytoplasmic. A helical transmembrane segment spans residues Ser592 to Phe612. The Lumenal segment spans residues Ser613–Met631. Residues Ile632–Phe652 traverse the membrane as a helical segment. The Cytoplasmic segment spans residues Val653–Asp663.

Belongs to the nonaspanin (TM9SF) (TC 9.A.2) family.

Its subcellular location is the endosome membrane. The protein resides in the golgi outpost. It is found in the cytoplasm. The protein localises to the cytoskeleton. It localises to the microtubule organizing center. Its function is as follows. In the intracellular compartments, may function as a channel or small molecule transporter. This Rattus norvegicus (Rat) protein is Transmembrane 9 superfamily member 2 (Tm9sf2).